The sequence spans 361 residues: UDP-N-acetylglucosamine--N-acetylmuramyl-(pentapeptide) pyrophosphoryl-undecaprenol N-acetylglucosamine transferase (361 aa).

Residues 12 to 14 (TGG), asparagine 123, arginine 166, serine 192, and glutamine 293 each bind UDP-N-acetyl-alpha-D-glucosamine.

The protein belongs to the glycosyltransferase 28 family. MurG subfamily.

The protein localises to the cell inner membrane. It carries out the reaction di-trans,octa-cis-undecaprenyl diphospho-N-acetyl-alpha-D-muramoyl-L-alanyl-D-glutamyl-meso-2,6-diaminopimeloyl-D-alanyl-D-alanine + UDP-N-acetyl-alpha-D-glucosamine = di-trans,octa-cis-undecaprenyl diphospho-[N-acetyl-alpha-D-glucosaminyl-(1-&gt;4)]-N-acetyl-alpha-D-muramoyl-L-alanyl-D-glutamyl-meso-2,6-diaminopimeloyl-D-alanyl-D-alanine + UDP + H(+). Its pathway is cell wall biogenesis; peptidoglycan biosynthesis. Cell wall formation. Catalyzes the transfer of a GlcNAc subunit on undecaprenyl-pyrophosphoryl-MurNAc-pentapeptide (lipid intermediate I) to form undecaprenyl-pyrophosphoryl-MurNAc-(pentapeptide)GlcNAc (lipid intermediate II). The polypeptide is UDP-N-acetylglucosamine--N-acetylmuramyl-(pentapeptide) pyrophosphoryl-undecaprenol N-acetylglucosamine transferase (Caulobacter vibrioides (strain ATCC 19089 / CIP 103742 / CB 15) (Caulobacter crescentus)).